A 450-amino-acid chain; its full sequence is Protein DA1-related 3 (450 aa).

The stretch at Met-1 to Gln-46 forms a coiled coil. Basic and acidic residues-rich tracts occupy residues Lys-27–Val-47 and Thr-56–Val-69. The segment at Lys-27–Gly-87 is disordered.

This is Protein DA1-related 3 (DAR3) from Arabidopsis thaliana (Mouse-ear cress).